Consider the following 851-residue polypeptide: Internalin J (851 aa).

Positions 1 to 25 (MKTTKIVIASLVSLTMVSNPLLTFA) are cleaved as a signal peptide. 14 LRR repeats span residues 94–115 (TLTS…EKLT), 116–136 (GLTK…SQNT), 137–157 (NLTY…TPLT), 158–179 (KLTY…QNPL), 180–200 (LTYL…HNTQ), 201–221 (LTEL…TPQT), 222–243 (QLTT…QNKL), 244–263 (LNRL…NQNI), 264–284 (QLTF…TPLT), 285–306 (QLTY…TLSK), 316–325 (DLLEIDLTHN), 338–357 (KIKE…DCQA), 359–368 (GITELDLSQN), and 380–402 (ELTE…NAHI). MucBP domains lie at 506–568 (PIKG…SQSV), 576–638 (IVAA…AQTV), 647–709 (APEK…SQTV), and 717–779 (IEAA…AQTV). The interval 786 to 825 (NTNTDQPLPTKKPTNTTPTKPSNLKTTEVKKASDTLPKTG) is disordered. Positions 792–811 (PLPTKKPTNTTPTKPSNLKT) are enriched in low complexity. Positions 821-825 (LPKTG) match the LPXTG sorting signal motif. A Pentaglycyl murein peptidoglycan amidated threonine modification is found at threonine 824. Positions 825-851 (GDSAPWKSALLGVFLSSTALVIWKKKK) are cleaved as a propeptide — removed by sortase A.

It belongs to the internalin family. Nearly full-length mature protein and an internal LRR-containing fragment interact in vitro with human intestinal mucin-2 (MUC2) but not with mucin-1. LRR fragment binding is slightly better at pH 5.5, (the pH of the intestine) than at pH 7.4.

The protein localises to the secreted. It localises to the cell wall. With respect to regulation, despite being transcribed during bacterial growth in culture the protein is only detected in infected mice. Functionally, involved in several steps of L.monocytogenes infection by both intravenous and oral infection. Probably acts as an adhesion; upon ectopic expression in L.innocula bacteria adhere better to human cell lines. This Listeria monocytogenes serovar 1/2a (strain ATCC BAA-679 / EGD-e) protein is Internalin J (inlJ).